Here is a 528-residue protein sequence, read N- to C-terminus: MTRDFKPGDLIFAKMKGYPHWPARVDEVPDGAVKPPTNKLPIFFFGTHETAFLGPKDIFPYSENKEKYGKPNKRKGFNEGLWEIDNNPKVKFSSQQVSTKQSNASSDVEAEEKETSVSKEDTDQEEKASNEDVTKAADITTPKAARRGRKRKAEKQVDTEEAGVVTAATASNVKASPKRGRPAATEVKIPKPRGRPKVVKQPCPSESDMVIDEDKSKKKGPEEKPPKKQLKKEEEGQKEEEKPRKEPDKKEGKKEVESKRKNLAKPGVTSTSDSEEDDDQEGEKKRKGGRHFQAAHRRNMLKGQHEKEAADRKRKQEEQMETEQQTKDEGKKPEVKKVEKKRETSMDSRLQRIHAEIKNSLKIDNLDVNRCIEALDELASLQVTMQQAQKHTEMITTLKKIRRFKVSQVIMEKSTMLYNKFKNMFLVGEGDSVITQVLNKSLAEQRQHEEANKTKDQGKKGPNKKLEKEQTGTKSLNGGSDAQESNHPQHNGDSAEESKDSREAGSKTKTPGEEREAEVSLKESTLDN.

One can recognise a PWWP domain in the interval 7–64 (PGDLIFAKMKGYPHWPARVDEVPDGAVKPPTNKLPIFFFGTHETAFLGPKDIFPYSEN). K75 is covalently cross-linked (Glycyl lysine isopeptide (Lys-Gly) (interchain with G-Cter in SUMO2)). The segment at 86-347 (NNPKVKFSSQ…VEKKRETSMD (262 aa)) is disordered. Residues 92-106 (FSSQQVSTKQSNASS) show a composition bias toward polar residues. Phosphoserine occurs at positions 102, 105, and 106. The segment covering 113 to 135 (KETSVSKEDTDQEEKASNEDVTK) has biased composition (basic and acidic residues). Phosphothreonine occurs at positions 115 and 122. S129 bears the Phosphoserine mark. At T141 the chain carries Phosphothreonine. The span at 144 to 153 (AARRGRKRKA) shows a compositional bias: basic residues. Positions 146–156 (RRGRKRKAEKQ) match the Nuclear localization signal motif. Residues S176 and S205 each carry the phosphoserine modification. Residues 212 to 260 (DEDKSKKKGPEEKPPKKQLKKEEEGQKEEEKPRKEPDKKEGKKEVESKR) are compositionally biased toward basic and acidic residues. The residue at position 270 (S270) is a Phosphoserine. Position 271 is a phosphothreonine (T271). 2 positions are modified to phosphoserine: S272 and S274. A compositionally biased stretch (basic residues) spans 285–300 (KRKGGRHFQAAHRRNM). Basic and acidic residues predominate over residues 303-347 (GQHEKEAADRKRKQEEQMETEQQTKDEGKKPEVKKVEKKRETSMD). Coiled coils occupy residues 304–332 (QHEK…EGKK) and 369–393 (NRCI…KHTE). The integrase-binding domain (IBD) stretch occupies residues 338–415 (VEKKRETSMD…VSQVIMEKST (78 aa)). S432 carries the post-translational modification Phosphoserine. Position 435 is a phosphothreonine (T435). S441 bears the Phosphoserine mark. Residues 444 to 471 (EQRQHEEANKTKDQGKKGPNKKLEKEQT) show a composition bias toward basic and acidic residues. The segment at 444–528 (EQRQHEEANK…VSLKESTLDN (85 aa)) is disordered. Positions 472–492 (GTKSLNGGSDAQESNHPQHNG) are enriched in polar residues. The span at 496–528 (EESKDSREAGSKTKTPGEEREAEVSLKESTLDN) shows a compositional bias: basic and acidic residues. R515 carries the post-translational modification Citrulline. S520 carries the phosphoserine modification. The residue at position 525 (T525) is a Phosphothreonine.

Belongs to the HDGF family. As to quaternary structure, monomer. Interacts with IFRD1/PC4. Interacts (via IBD domain) with POGZ (via IBM motif) and CDCA7L (via IBM motifs). Interacts (via IBD domain) with KMT2A (via IBM motifs) with a moderate affinity whereas interacts with the KMT2A-MEN1 complex with a greater affinity; MEN1 enhances interaction of KMT2A with PSIP1. Interacts (via IBD domain) with IWS1 (via IBM motif), MED1 (via IBM motif) and DBF4 (via IBM motifs). Citrullinated by PADI4.

The protein localises to the nucleus. Its function is as follows. Transcriptional coactivator involved in neuroepithelial stem cell differentiation and neurogenesis. Involved in particular in lens epithelial cell gene regulation and stress responses. May play an important role in lens epithelial to fiber cell terminal differentiation. May play a protective role during stress-induced apoptosis. The polypeptide is PC4 and SFRS1-interacting protein (Psip1) (Rattus norvegicus (Rat)).